We begin with the raw amino-acid sequence, 638 residues long: Probable potassium transport system protein Kup (638 aa).

Transmembrane regions (helical) follow at residues 25–45 (LAIA…LYSL), 65–85 (VISL…LLFV), 114–134 (AGAL…DAVI), 152–172 (PHLS…LFWI), 184–204 (FGPI…YHIV), 226–246 (LLQA…AEAL), 262–282 (AYGL…ALLI), 291–311 (PFFL…STVA), 352–372 (IYVP…VVGF), 382–402 (YGIA…VVMV), 410–430 (LLVG…FGAN), and 434–454 (VAQG…LLMT).

The protein belongs to the HAK/KUP transporter (TC 2.A.72) family.

Its subcellular location is the cell inner membrane. It carries out the reaction K(+)(in) + H(+)(in) = K(+)(out) + H(+)(out). Its function is as follows. Transport of potassium into the cell. Likely operates as a K(+):H(+) symporter. The polypeptide is Probable potassium transport system protein Kup (Burkholderia cenocepacia (strain HI2424)).